The sequence spans 324 residues: Proto-oncogene Mas (324 aa).

Residues 1–35 are Extracellular-facing; that stretch reads MDQSNMTSFAEEKAMNTSSRNASLGTSHPPIPIVH. N-linked (GlcNAc...) asparagine glycosylation is found at Asn5, Asn16, and Asn21. Residues 36–60 form a helical membrane-spanning segment; the sequence is WVIMSISPLGFVENGILLWFLCFRM. Residues 61-64 lie on the Cytoplasmic side of the membrane; it reads RRNP. The helical transmembrane segment at 65–86 threads the bilayer; it reads FTVYITHLSIADISLLFCIFIL. The Extracellular portion of the chain corresponds to 87–103; the sequence is SIDYALDYELSSGHYYT. The helical transmembrane segment at 104–127 threads the bilayer; sequence IVTLSVTFLFGYNTGLYLLTAISV. The Cytoplasmic segment spans residues 128 to 148; that stretch reads ERCLSVLYPIWYRCHRPKHQS. A helical membrane pass occupies residues 149–171; that stretch reads AFVCALLWALSCLVTTMEYVMCI. The Extracellular segment spans residues 172 to 184; that stretch reads DSGEESHSQSDCR. Residues 185–205 form a helical membrane-spanning segment; that stretch reads AVIIFIAILSFLVFTPLMLVS. Topologically, residues 206-223 are cytoplasmic; that stretch reads STILVVKIRKNTWASHSS. A helical transmembrane segment spans residues 224 to 244; it reads KLYIVIMVTIIIFLIFAMPMR. Over 245–262 the chain is Extracellular; it reads VLYLLYYEYWSTFGNLHN. Residues 263 to 283 form a helical membrane-spanning segment; it reads ISLLFSTINSSANPFIYFFVG. At 284 to 324 the chain is on the cytoplasmic side; that stretch reads SSKKKRFRESLKVVLTRAFKDEMQPRRQEGNGNTVSIETVV.

Belongs to the G-protein coupled receptor 1 family. Interacts with AGTR1. Interacts with FLNA (via filamin repeat 21); increases PKA-mediated phosphorylation of FLNA. Expressed in platelets.

It is found in the cell membrane. In terms of biological role, receptor for angiotensin 1-7. Acts specifically as a functional antagonist of AGTR1 (angiotensin-2 type 1 receptor), although it up-regulates AGTR1 receptor levels. Positive regulation of AGTR1 levels occurs through activation of the G-proteins GNA11 and GNAQ, and stimulation of the protein kinase C signaling cascade. The antagonist effect on AGTR1 function is probably due to AGTR1 being physically altered by MAS1. The protein is Proto-oncogene Mas (Mas1) of Rattus norvegicus (Rat).